A 602-amino-acid polypeptide reads, in one-letter code: Probable beta-glucosidase btgE (602 aa).

The first 18 residues, 1-18 (MRGAFLAAAAAVAGTAMA), serve as a signal peptide directing secretion. Disordered stretches follow at residues 61–94 (PPTLVPINTPAPEPSSSSSSEVPSVPSSESSVVT) and 116–166 (GVDA…TSFS). Over residues 74–94 (PSSSSSSEVPSVPSSESSVVT) the composition is skewed to low complexity. Polar residues predominate over residues 152-166 (TSESPLPTPGVTSFS). Glu-443 acts as the Proton donor in catalysis. Glu-538 (nucleophile) is an active-site residue.

This sequence belongs to the glycosyl hydrolase 17 family.

The protein resides in the secreted. The protein localises to the cell wall. It catalyses the reaction Hydrolysis of terminal, non-reducing beta-D-glucosyl residues with release of beta-D-glucose.. The protein operates within glycan metabolism; cellulose degradation. Beta-glucosidases are one of a number of cellulolytic enzymes involved in the degradation of cellulosic biomass. Catalyzes the last step releasing glucose from the inhibitory cellobiose. This is Probable beta-glucosidase btgE (btgE) from Aspergillus flavus (strain ATCC 200026 / FGSC A1120 / IAM 13836 / NRRL 3357 / JCM 12722 / SRRC 167).